Here is a 285-residue protein sequence, read N- to C-terminus: Bifunctional protein FolD (285 aa).

NADP(+) contacts are provided by residues 166–168 (GRS), serine 191, and threonine 232.

Belongs to the tetrahydrofolate dehydrogenase/cyclohydrolase family. In terms of assembly, homodimer.

It carries out the reaction (6R)-5,10-methylene-5,6,7,8-tetrahydrofolate + NADP(+) = (6R)-5,10-methenyltetrahydrofolate + NADPH. The enzyme catalyses (6R)-5,10-methenyltetrahydrofolate + H2O = (6R)-10-formyltetrahydrofolate + H(+). It participates in one-carbon metabolism; tetrahydrofolate interconversion. Catalyzes the oxidation of 5,10-methylenetetrahydrofolate to 5,10-methenyltetrahydrofolate and then the hydrolysis of 5,10-methenyltetrahydrofolate to 10-formyltetrahydrofolate. This Chloroflexus aggregans (strain MD-66 / DSM 9485) protein is Bifunctional protein FolD.